A 637-amino-acid chain; its full sequence is Sodium-dependent phosphate transport protein 2A (637 aa).

Over 1 to 103 (MMSYSERLGG…LAQVGTKLLK (103 aa)) the chain is Cytoplasmic. Residues S14 and S34 each carry the phosphoserine modification. A helical membrane pass occupies residues 104-125 (VPLMLGFLYLFVCSLDVLSSAF). Residues 126-145 (QLAGGKVAGDIFKDNAILSN) lie on the Extracellular side of the membrane. The chain crosses the membrane as a helical span at residues 146–163 (PVAGLVVGILVTVLVQSS). The Cytoplasmic segment spans residues 164–216 (STSTSIIVSMVSSGLLEVSSAIPIIMGSNIGTSVTNTIVALMQAGDRTDFRRA). Residues 217–236 (FAGATVHDCFNWLSVLVLLP) traverse the membrane as a helical segment. 2 disulfide bridges follow: C225-C520 and C306-C334. Residues 237-345 (LEAATGYLHH…HIFVDTGLPD (109 aa)) lie on the Extracellular side of the membrane. 2 N-linked (GlcNAc...) asparagine glycosylation sites follow: N298 and N328. Residues 346–368 (LAVGLILLAGSLVVLCTCLILLV) traverse the membrane as a helical segment. Residues 369–410 (KMLNSLLKGQVANVIQKVINTDFPAPFTWVTGYFAMVVGASM) are Cytoplasmic-facing. Residues 411 to 434 (TFVVQSSSVFTSAITPLIGLGVIS) traverse the membrane as a helical segment. Residues 435–464 (IERAYPLTLGSNIGTTTTAILAALASPREK) are Extracellular-facing. Residues 465–485 (LSSSFQIALCHFFFNISGILL) traverse the membrane as a helical segment. Over 486 to 511 (WYPLPCTRLPIRMAKALGKRTAKYRW) the chain is Cytoplasmic. Position 506 is a phosphothreonine; by PKC (T506). The helical transmembrane segment at 512-532 (FAVLYLLVCFLLLPSLVFGIS) threads the bilayer. The Extracellular segment spans residues 533-537 (MAGWQ). Residues 538 to 559 (AMVGVGTPFGALLAFVVLVNVL) traverse the membrane as a helical segment. Residues 560–637 (QSRSPGHLPK…LPAHHNATRL (78 aa)) are Cytoplasmic-facing. S605 carries the post-translational modification Phosphoserine. Position 621 is a phosphothreonine (T621). At S623 the chain carries Phosphoserine.

It belongs to the SLC34A transporter family. As to quaternary structure, interacts via its C-terminal region with NHERF4. Interacts with NHERF1. Interacts with TMEM174; regulates SLC34A1 internalization by PTH and FGF23. Kidney.

It is found in the apical cell membrane. Its subcellular location is the cell membrane. It carries out the reaction 3 Na(+)(out) + phosphate(out) = 3 Na(+)(in) + phosphate(in). Transport activity is significantly increased in response to dietary phosphate deprivation. Its function is as follows. Involved in actively transporting phosphate into cells via Na(+) cotransport in the renal brush border membrane. The cotransport has a Na(+):Pi stoichiometry of 3:1 and is electrogenic. The chain is Sodium-dependent phosphate transport protein 2A from Rattus norvegicus (Rat).